The chain runs to 270 residues: Formamidopyrimidine-DNA glycosylase (270 aa).

Pro-2 functions as the Schiff-base intermediate with DNA in the catalytic mechanism. The Proton donor role is filled by Glu-3. Lys-58 acts as the Proton donor; for beta-elimination activity in catalysis. Residues His-91, Arg-110, and Arg-151 each coordinate DNA. The segment at 236-270 (FVYGRGGENCKVCGTGLREIKLGQRASVYCPRCQS) adopts an FPG-type zinc-finger fold. The active-site Proton donor; for delta-elimination activity is the Arg-260.

This sequence belongs to the FPG family. In terms of assembly, monomer. The cofactor is Zn(2+).

The catalysed reaction is Hydrolysis of DNA containing ring-opened 7-methylguanine residues, releasing 2,6-diamino-4-hydroxy-5-(N-methyl)formamidopyrimidine.. It catalyses the reaction 2'-deoxyribonucleotide-(2'-deoxyribose 5'-phosphate)-2'-deoxyribonucleotide-DNA = a 3'-end 2'-deoxyribonucleotide-(2,3-dehydro-2,3-deoxyribose 5'-phosphate)-DNA + a 5'-end 5'-phospho-2'-deoxyribonucleoside-DNA + H(+). Its function is as follows. Involved in base excision repair of DNA damaged by oxidation or by mutagenic agents. Acts as a DNA glycosylase that recognizes and removes damaged bases. Has a preference for oxidized purines, such as 7,8-dihydro-8-oxoguanine (8-oxoG). Has AP (apurinic/apyrimidinic) lyase activity and introduces nicks in the DNA strand. Cleaves the DNA backbone by beta-delta elimination to generate a single-strand break at the site of the removed base with both 3'- and 5'-phosphates. This Pseudomonas fluorescens (strain ATCC BAA-477 / NRRL B-23932 / Pf-5) protein is Formamidopyrimidine-DNA glycosylase.